We begin with the raw amino-acid sequence, 359 residues long: Putative transposase y4uE (359 aa).

2 disordered regions span residues 1–31 (MGDGPNWRSLPEPSRFVGSDPSPPVPRAPGG) and 318–359 (HYAH…EEAA).

The protein belongs to the transposase 9 family.

This chain is Putative transposase y4uE, found in Sinorhizobium fredii (strain NBRC 101917 / NGR234).